The following is a 309-amino-acid chain: Dicarboxylate carrier UCP2 (309 aa).

Residues 1–16 are Mitochondrial intermembrane-facing; sequence MVGFKATDVPPTATVK. 3 Solcar repeats span residues 11–106, 114–203, and 212–297; these read PTAT…VKQF, AGIG…IKDA, and DDLP…LKRA. Positions 16–63 are important for interaction with long-chain fatty acids; the sequence is KFLGAGTAACIADLITFPLDTAKVRLQIQGERQGPVRAAASAQYRGVL. Residues 17–40 form a helical membrane-spanning segment; it reads FLGAGTAACIADLITFPLDTAKVR. The Mitochondrial matrix segment spans residues 41 to 77; that stretch reads LQIQGERQGPVRAAASAQYRGVLCTILTMVRTEGPRS. A helical membrane pass occupies residues 78 to 103; sequence LYSGLVAGLQRQMSFASVRIGLYDSV. Residues 104–119 are Mitochondrial intermembrane-facing; it reads KQFYTKGSEHAGIGSR. The helical transmembrane segment at 120-145 threads the bilayer; that stretch reads LLAGSTTGALAVAVAQPTDVVKVRFQ. The Mitochondrial matrix segment spans residues 146–173; the sequence is AQARAGSGRRYQSTVDAYKTIAREEGFR. Residues 174 to 199 traverse the membrane as a helical segment; sequence GLWKGTSPNVARNAIVNCAELVTYDL. Residues 200–217 lie on the Mitochondrial intermembrane side of the membrane; that stretch reads IKDALLKANLMTDDLPCH. A helical membrane pass occupies residues 218–242; it reads FTSAFGAGFCTTVIASPVDVVKTRY. Residues 243–268 are Mitochondrial matrix-facing; sequence MNSALGQYSSAGHCALTMLQKEGPRA. A helical membrane pass occupies residues 269–294; sequence FYKGFMPSFLRLGSWNVVMFVTYEQL. The important for interaction with long-chain fatty acids stretch occupies residues 278–285; it reads LRLGSWNV. Topologically, residues 295-309 are mitochondrial intermembrane; sequence KRALMAACTSREAPF.

Belongs to the mitochondrial carrier (TC 2.A.29) family. In terms of assembly, homotetramer. Adopts an asymmetrical dimer of dimers functional form. Interacts with MICU1 (when methylated); leading to decrease the calcium sensitivity of MICU1.

The protein resides in the mitochondrion inner membrane. The enzyme catalyses L-aspartate(out) + phosphate(in) + H(+)(in) = L-aspartate(in) + phosphate(out) + H(+)(out). The catalysed reaction is oxaloacetate(out) + phosphate(in) + H(+)(in) = oxaloacetate(in) + phosphate(out) + H(+)(out). It carries out the reaction (S)-malate(out) + phosphate(in) + H(+)(in) = (S)-malate(in) + phosphate(out) + H(+)(out). It catalyses the reaction malonate(out) + phosphate(in) + H(+)(in) = malonate(in) + phosphate(out) + H(+)(out). The enzyme catalyses sulfate(out) + phosphate(in) + H(+)(in) = sulfate(in) + phosphate(out) + H(+)(out). The catalysed reaction is (S)-malate(out) = (S)-malate(in). It carries out the reaction L-aspartate(out) = L-aspartate(in). It catalyses the reaction phosphate(in) = phosphate(out). The enzyme catalyses chloride(in) = chloride(out). The catalysed reaction is H(+)(in) = H(+)(out). It carries out the reaction a long-chain fatty acid(out) = a long-chain fatty acid(in). Antiporter that exports dicarboxylate intermediates of the Krebs cycle in exchange for phosphate plus a proton across the inner membrane of mitochondria, a process driven by mitochondrial motive force with an overall impact on glycolysis, glutaminolysis and glutathione-dependent redox balance. Continuous export of oxaloacetate and related four-carbon dicarboxylates from mitochondrial matrix into the cytosol negatively regulates the oxidation of acetyl-CoA substrates via the Krebs cycle lowering the ATP/ADP ratio and reactive oxygen species (ROS) production. May mediate inducible proton entry into the mitochondrial matrix affecting ATP turnover as a protection mechanism against oxidative stress. The proton currents are most likely associated with fatty acid flipping across the inner membrane of mitochondria in a metabolic process regulated by free fatty acids and purine nucleotides. Regulates the use of glucose as a source of energy. Required for glucose-induced DRP1-dependent mitochondrial fission and neuron activation in the ventromedial nucleus of the hypothalamus (VMH). This mitochondrial adaptation mechanism modulates the VMH pool of glucose-excited neurons with an impact on systemic glucose homeostasis. Regulates ROS levels and metabolic reprogramming of macrophages during the resolution phase of inflammation. Attenuates ROS production in response to IL33 to preserve the integrity of the Krebs cycle required for persistent production of itaconate and subsequent GATA3-dependent differentiation of inflammation-resolving alternatively activated macrophages. Can unidirectionally transport anions including L-malate, L-aspartate, phosphate and chloride ions. Does not mediate adaptive thermogenesis. In Canis lupus familiaris (Dog), this protein is Dicarboxylate carrier UCP2 (UCP2).